We begin with the raw amino-acid sequence, 478 residues long: Ribosomal RNA small subunit methyltransferase F (478 aa).

S-adenosyl-L-methionine contacts are provided by residues 123-129 (AAAPGSK), glutamate 147, aspartate 174, and aspartate 192. Cysteine 245 serves as the catalytic Nucleophile.

The protein belongs to the class I-like SAM-binding methyltransferase superfamily. RsmB/NOP family.

It is found in the cytoplasm. The enzyme catalyses cytidine(1407) in 16S rRNA + S-adenosyl-L-methionine = 5-methylcytidine(1407) in 16S rRNA + S-adenosyl-L-homocysteine + H(+). Its function is as follows. Specifically methylates the cytosine at position 1407 (m5C1407) of 16S rRNA. This Vibrio parahaemolyticus serotype O3:K6 (strain RIMD 2210633) protein is Ribosomal RNA small subunit methyltransferase F.